Consider the following 2110-residue polypeptide: Protein Ycf2 (2110 aa).

The disordered stretch occupies residues 190–209; sequence DSSQLKGSSDQSRDPLDSIS. 1442–1449 lines the ATP pocket; sequence GSIGTGRS.

It belongs to the Ycf2 family.

It localises to the plastid. The protein resides in the chloroplast stroma. In terms of biological role, probable ATPase of unknown function. Its presence in a non-photosynthetic plant (Epifagus virginiana) and experiments in tobacco indicate that it has an essential function which is probably not related to photosynthesis. This is Protein Ycf2 from Panax ginseng (Korean ginseng).